The chain runs to 361 residues: tRNA-specific 2-thiouridylase MnmA (361 aa).

ATP-binding positions include Ala-8 to Ser-15 and Met-34. The active-site Nucleophile is the Cys-104. A disulfide bridge links Cys-104 with Cys-202. Gly-128 lines the ATP pocket. Residues Lys-152 to Gln-154 are interaction with tRNA. Residue Cys-202 is the Cysteine persulfide intermediate of the active site. Positions Arg-307–Tyr-308 are interaction with tRNA.

Belongs to the MnmA/TRMU family.

It localises to the cytoplasm. The catalysed reaction is S-sulfanyl-L-cysteinyl-[protein] + uridine(34) in tRNA + AH2 + ATP = 2-thiouridine(34) in tRNA + L-cysteinyl-[protein] + A + AMP + diphosphate + H(+). In terms of biological role, catalyzes the 2-thiolation of uridine at the wobble position (U34) of tRNA, leading to the formation of s(2)U34. The sequence is that of tRNA-specific 2-thiouridylase MnmA from Caldicellulosiruptor saccharolyticus (strain ATCC 43494 / DSM 8903 / Tp8T 6331).